Consider the following 398-residue polypeptide: Phosphoglycerate kinase (398 aa).

Substrate is bound by residues 21–23, Arg36, 59–62, Arg117, and Arg150; these read DFN and HFGR. ATP-binding positions include Lys200, Glu321, and 351–354; that span reads GGDS.

The protein belongs to the phosphoglycerate kinase family. Monomer.

The protein resides in the cytoplasm. The catalysed reaction is (2R)-3-phosphoglycerate + ATP = (2R)-3-phospho-glyceroyl phosphate + ADP. It participates in carbohydrate degradation; glycolysis; pyruvate from D-glyceraldehyde 3-phosphate: step 2/5. This Wolbachia sp. subsp. Drosophila simulans (strain wRi) protein is Phosphoglycerate kinase.